We begin with the raw amino-acid sequence, 345 residues long: Large ribosomal subunit protein uL4 (345 aa).

At A2 the chain carries N-acetylalanine.

This sequence belongs to the universal ribosomal protein uL4 family.

The sequence is that of Large ribosomal subunit protein uL4 (rpl-4) from Caenorhabditis elegans.